We begin with the raw amino-acid sequence, 432 residues long: MNYATQMEAARKGIITREMETVARKEMVDPAKLRELIAEGRVVIPANKNHASLDPCGIGQGLRTKINVNLGVSRDCCNIGMELEKARLAIELKADAIMDLSCYGRTEEFRRRLIEMSPAAVGTVPVYDAVGFYGKELKEISAEEFLGVVEKHAQDGVDFMTIHAGINRETAARFKKNPRLTNIVSRGGSLLFAWMELNGRENPFYEYFDELLEICRKYDVTISLGDACRPGSVKDATDASQIQELIVLGELTKRAWEKDVQVMIEGPGHMPLNEIIPNMLLEKKLCHGAPFYVLGPLVTDVAPGYDHITSAIGGAIAAASGADFLCYVTPAEHLRLPTLEDMKEGIIASRIAAHAADIAKGVPGARQWDDKMSEARRNLDWQKMFELALDPEKARRYRAESQPESEDTCTMCGKMCAVRNMNRVLSGAGPDG.

Substrate-binding positions include asparagine 69, methionine 98, tyrosine 127, histidine 163, 185-187 (SRG), 226-229 (DACR), and glutamate 265. Position 269 (histidine 269) interacts with Zn(2+). Residue tyrosine 292 participates in substrate binding. A Zn(2+)-binding site is contributed by histidine 333. The [4Fe-4S] cluster site is built by cysteine 409, cysteine 412, and cysteine 416.

It belongs to the ThiC family. [4Fe-4S] cluster is required as a cofactor.

It carries out the reaction 5-amino-1-(5-phospho-beta-D-ribosyl)imidazole + S-adenosyl-L-methionine = 4-amino-2-methyl-5-(phosphooxymethyl)pyrimidine + CO + 5'-deoxyadenosine + formate + L-methionine + 3 H(+). It functions in the pathway cofactor biosynthesis; thiamine diphosphate biosynthesis. Its function is as follows. Catalyzes the synthesis of the hydroxymethylpyrimidine phosphate (HMP-P) moiety of thiamine from aminoimidazole ribotide (AIR) in a radical S-adenosyl-L-methionine (SAM)-dependent reaction. This is Phosphomethylpyrimidine synthase from Pelotomaculum thermopropionicum (strain DSM 13744 / JCM 10971 / SI).